A 1097-amino-acid polypeptide reads, in one-letter code: DNA-directed RNA polymerase subunit beta (1097 aa).

The tract at residues Gln1072–Asp1097 is disordered.

Belongs to the RNA polymerase beta chain family. As to quaternary structure, in cyanobacteria the RNAP catalytic core is composed of 2 alpha, 1 beta, 1 beta', 1 gamma and 1 omega subunit. When a sigma factor is associated with the core the holoenzyme is formed, which can initiate transcription.

The catalysed reaction is RNA(n) + a ribonucleoside 5'-triphosphate = RNA(n+1) + diphosphate. Its function is as follows. DNA-dependent RNA polymerase catalyzes the transcription of DNA into RNA using the four ribonucleoside triphosphates as substrates. This Synechococcus sp. (strain CC9902) protein is DNA-directed RNA polymerase subunit beta.